Here is a 370-residue protein sequence, read N- to C-terminus: Ubiquinone biosynthesis O-methyltransferase, mitochondrial (370 aa).

The N-terminal 86 residues, 1-86 (MWRGGRLGSR…TYRTPWKRLY (86 aa)), are a transit peptide targeting the mitochondrion. R125 serves as a coordination point for S-adenosyl-L-methionine. N6-acetyllysine is present on residues K144 and K150. Residues G155 and D176 each coordinate S-adenosyl-L-methionine. K197 is subject to N6-acetyllysine. An S-adenosyl-L-methionine-binding site is contributed by S223. E224, E227, and H228 together coordinate Mg(2+). The tract at residues 336 to 370 (AQEHQEPAESALKGETGALHANTSGSPSVREEQRT) is disordered.

The protein belongs to the class I-like SAM-binding methyltransferase superfamily. UbiG/COQ3 family. As to quaternary structure, component of a multi-subunit COQ enzyme complex, composed of at least COQ3, COQ4, COQ5, COQ6, COQ7 and COQ9. Requires Mg(2+) as cofactor.

It is found in the mitochondrion inner membrane. It carries out the reaction 3,4-dihydroxy-5-(all-trans-decaprenyl)benzoate + S-adenosyl-L-methionine = 4-hydroxy-3-methoxy-5-(all-trans-decaprenyl)benzoate + S-adenosyl-L-homocysteine + H(+). It catalyses the reaction a 3-demethylubiquinone + S-adenosyl-L-methionine = a ubiquinone + S-adenosyl-L-homocysteine. The catalysed reaction is 3-demethylubiquinol-10 + S-adenosyl-L-methionine = ubiquinol-10 + S-adenosyl-L-homocysteine + H(+). It functions in the pathway cofactor biosynthesis; ubiquinone biosynthesis. O-methyltransferase required for two non-consecutive steps during ubiquinone biosynthesis. Catalyzes the 2 O-methylation of 3,4-dihydroxy-5-(all-trans-decaprenyl)benzoic acid into 4-hydroxy-3-methoxy-5-(all-trans-decaprenyl)benzoic acid. Also catalyzes the last step of ubiquinone biosynthesis by mediating methylation of 3-demethylubiquinone into ubiquinone. Also able to mediate the methylation of 3-demethylubiquinol-10 into ubiquinol-10. In Mus musculus (Mouse), this protein is Ubiquinone biosynthesis O-methyltransferase, mitochondrial.